Reading from the N-terminus, the 395-residue chain is uncharacterized protein (395 aa).

The next 8 membrane-spanning stretches (helical) occupy residues 15–35 (ILAF…VTVF), 56–76 (WPWI…NIII), 86–106 (FHAP…FQIV), 131–151 (AVLL…LITW), 175–195 (WFSF…IFIA), 254–274 (LANI…FAIV), 298–318 (IAIT…TQFV), and 348–368 (VYIP…QVVI).

Its subcellular location is the cell membrane. This is an uncharacterized protein from Mycoplasma pneumoniae (strain ATCC 29342 / M129 / Subtype 1) (Mycoplasmoides pneumoniae).